Here is a 214-residue protein sequence, read N- to C-terminus: 3-isopropylmalate dehydratase small subunit (214 aa).

It belongs to the LeuD family. LeuD type 1 subfamily. Heterodimer of LeuC and LeuD.

It catalyses the reaction (2R,3S)-3-isopropylmalate = (2S)-2-isopropylmalate. Its pathway is amino-acid biosynthesis; L-leucine biosynthesis; L-leucine from 3-methyl-2-oxobutanoate: step 2/4. Functionally, catalyzes the isomerization between 2-isopropylmalate and 3-isopropylmalate, via the formation of 2-isopropylmaleate. The chain is 3-isopropylmalate dehydratase small subunit from Pseudomonas putida (strain W619).